The following is a 325-amino-acid chain: Germination protease (325 aa).

The propeptide occupies Met-1 to Asp-7.

It belongs to the peptidase A25 family. In terms of assembly, homotetramer. In terms of processing, autoproteolytically processed. The inactive tetrameric zymogen termed p46 autoprocesses to a smaller form termed p41, which is active only during spore germination.

The enzyme catalyses Endopeptidase action with P4 Glu or Asp, P1 preferably Glu &gt; Asp, P1' hydrophobic and P2' Ala.. Its function is as follows. Initiates the rapid degradation of small, acid-soluble proteins during spore germination. The protein is Germination protease of Clostridium perfringens (strain 13 / Type A).